The primary structure comprises 169 residues: Cell division inhibitor SulA (169 aa).

Residues 106–112 (ALRTGNY) form a ftsZ binding region. The lon protease binding stretch occupies residues 162-169 (KIHSNLYH).

Belongs to the SulA family. As to quaternary structure, interacts with FtsZ. Is rapidly cleaved and degraded by the Lon protease once DNA damage is repaired.

Component of the SOS system and an inhibitor of cell division. Accumulation of SulA causes rapid cessation of cell division and the appearance of long, non-septate filaments. In the presence of GTP, binds a polymerization-competent form of FtsZ in a 1:1 ratio, thus inhibiting FtsZ polymerization and therefore preventing it from participating in the assembly of the Z ring. This mechanism prevents the premature segregation of damaged DNA to daughter cells during cell division. The protein is Cell division inhibitor SulA of Salmonella agona (strain SL483).